Consider the following 191-residue polypeptide: MEKFTIYKGTSVPLMNDNIDTDQIIPKQFLKAIDKKGFGKNLFYEWRYSKDYEENPDFMLNKPQYRKASLLISGDNFGSGSSREHAAWALADYGFRAIIAGSYSDIFYNNSLKNGLLPIVQPKEALKSLAQLSSQEEITIDLPHQLIQTSTENFYFEIDPIWKDKLINGLDDIGITLQYEQAITAYEQKHQ.

The protein belongs to the LeuD family. LeuD type 1 subfamily. As to quaternary structure, heterodimer of LeuC and LeuD.

The enzyme catalyses (2R,3S)-3-isopropylmalate = (2S)-2-isopropylmalate. Its pathway is amino-acid biosynthesis; L-leucine biosynthesis; L-leucine from 3-methyl-2-oxobutanoate: step 2/4. Functionally, catalyzes the isomerization between 2-isopropylmalate and 3-isopropylmalate, via the formation of 2-isopropylmaleate. In Lactococcus lactis subsp. cremoris (strain MG1363), this protein is 3-isopropylmalate dehydratase small subunit.